A 68-amino-acid chain; its full sequence is Preprofallaxidin-5 (68 aa).

The signal sequence occupies residues 1 to 22 (MASLKKSLFLVLFLGFVSLSIC). A propeptide spanning residues 23 to 51 (EEEKREDKEDEGENEEAEENHEERSEEKR) is cleaved from the precursor. A disordered region spans residues 24-50 (EEKREDKEDEGENEEAEENHEERSEEK). Positions 30–42 (KEDEGENEEAEEN) are enriched in acidic residues. Residue L64 is modified to Leucine amide. Residue S68 is a propeptide.

Belongs to the frog skin active peptide (FSAP) family. Brevinin subfamily. Expressed by the skin glands.

Its subcellular location is the secreted. In Litoria fallax (Eastern dwarf tree frog), this protein is Preprofallaxidin-5.